A 477-amino-acid polypeptide reads, in one-letter code: Bifunctional protein HldE (477 aa).

The ribokinase stretch occupies residues 1–318; the sequence is MKVNLPAFER…ENAVRGRAAT (318 aa). 195-198 lines the ATP pocket; sequence NLSE. The active site involves Asp264. Residues 344 to 477 form a cytidylyltransferase region; it reads MTNGVFDILH…IKKIQTESEK (134 aa).

The protein in the N-terminal section; belongs to the carbohydrate kinase PfkB family. In the C-terminal section; belongs to the cytidylyltransferase family. As to quaternary structure, homodimer.

The enzyme catalyses D-glycero-beta-D-manno-heptose 7-phosphate + ATP = D-glycero-beta-D-manno-heptose 1,7-bisphosphate + ADP + H(+). The catalysed reaction is D-glycero-beta-D-manno-heptose 1-phosphate + ATP + H(+) = ADP-D-glycero-beta-D-manno-heptose + diphosphate. Its pathway is nucleotide-sugar biosynthesis; ADP-L-glycero-beta-D-manno-heptose biosynthesis; ADP-L-glycero-beta-D-manno-heptose from D-glycero-beta-D-manno-heptose 7-phosphate: step 1/4. It functions in the pathway nucleotide-sugar biosynthesis; ADP-L-glycero-beta-D-manno-heptose biosynthesis; ADP-L-glycero-beta-D-manno-heptose from D-glycero-beta-D-manno-heptose 7-phosphate: step 3/4. Functionally, catalyzes the phosphorylation of D-glycero-D-manno-heptose 7-phosphate at the C-1 position to selectively form D-glycero-beta-D-manno-heptose-1,7-bisphosphate. Catalyzes the ADP transfer from ATP to D-glycero-beta-D-manno-heptose 1-phosphate, yielding ADP-D-glycero-beta-D-manno-heptose. The polypeptide is Bifunctional protein HldE (Salmonella arizonae (strain ATCC BAA-731 / CDC346-86 / RSK2980)).